The sequence spans 74 residues: UPF0154 protein OB1676 (74 aa).

The helical transmembrane segment at 4-24 threads the bilayer; sequence IWVVLIAIAALVAGVALGFFI.

The protein belongs to the UPF0154 family.

The protein resides in the membrane. The polypeptide is UPF0154 protein OB1676 (Oceanobacillus iheyensis (strain DSM 14371 / CIP 107618 / JCM 11309 / KCTC 3954 / HTE831)).